The chain runs to 182 residues: tRNA-splicing endonuclease (182 aa).

Residues Tyr-119, His-127, and Lys-158 contribute to the active site.

The protein belongs to the tRNA-intron endonuclease family. Archaeal short subfamily. In terms of assembly, homotetramer; although the tetramer contains four active sites, only two participate in the cleavage. Therefore, it should be considered as a dimer of dimers.

The catalysed reaction is pretRNA = a 3'-half-tRNA molecule with a 5'-OH end + a 5'-half-tRNA molecule with a 2',3'-cyclic phosphate end + an intron with a 2',3'-cyclic phosphate and a 5'-hydroxyl terminus.. Endonuclease that removes tRNA introns. Cleaves pre-tRNA at the 5'- and 3'-splice sites to release the intron. The products are an intron and two tRNA half-molecules bearing 2',3' cyclic phosphate and 5'-OH termini. Recognizes a pseudosymmetric substrate in which 2 bulged loops of 3 bases are separated by a stem of 4 bp. The chain is tRNA-splicing endonuclease from Saccharolobus islandicus (strain M.16.27) (Sulfolobus islandicus).